The following is a 124-amino-acid chain: ATP synthase epsilon chain (124 aa).

The interval 97–124 is disordered; it reads ARVREASSEEEKSRAESELRAVKRSKEK.

The protein belongs to the ATPase epsilon chain family. As to quaternary structure, F-type ATPases have 2 components, CF(1) - the catalytic core - and CF(0) - the membrane proton channel. CF(1) has five subunits: alpha(3), beta(3), gamma(1), delta(1), epsilon(1). CF(0) has three main subunits: a, b and c.

Its subcellular location is the cell membrane. Produces ATP from ADP in the presence of a proton gradient across the membrane. This chain is ATP synthase epsilon chain, found in Corynebacterium urealyticum (strain ATCC 43042 / DSM 7109).